Consider the following 523-residue polypeptide: GMP synthase [glutamine-hydrolyzing] (523 aa).

A Glutamine amidotransferase type-1 domain is found at 8–205 (KILILDFGSQ…VVNICGCTTN (198 aa)). The active-site Nucleophile is the cysteine 85. Residues histidine 179 and glutamate 181 contribute to the active site. A GMPS ATP-PPase domain is found at 206-398 (WTPENIIEDA…LGLPAEMLNR (193 aa)). 233 to 239 (SGGVDSS) is an ATP binding site.

As to quaternary structure, homodimer.

The enzyme catalyses XMP + L-glutamine + ATP + H2O = GMP + L-glutamate + AMP + diphosphate + 2 H(+). Its pathway is purine metabolism; GMP biosynthesis; GMP from XMP (L-Gln route): step 1/1. Its function is as follows. Catalyzes the synthesis of GMP from XMP. The sequence is that of GMP synthase [glutamine-hydrolyzing] from Mannheimia succiniciproducens (strain KCTC 0769BP / MBEL55E).